The primary structure comprises 243 residues: NAD(P)H-quinone oxidoreductase subunit K, chloroplastic (243 aa).

4 residues coordinate [4Fe-4S] cluster: cysteine 65, cysteine 66, cysteine 130, and cysteine 161.

Belongs to the complex I 20 kDa subunit family. NDH is composed of at least 16 different subunits, 5 of which are encoded in the nucleus. [4Fe-4S] cluster serves as cofactor.

Its subcellular location is the plastid. It is found in the chloroplast thylakoid membrane. The enzyme catalyses a plastoquinone + NADH + (n+1) H(+)(in) = a plastoquinol + NAD(+) + n H(+)(out). The catalysed reaction is a plastoquinone + NADPH + (n+1) H(+)(in) = a plastoquinol + NADP(+) + n H(+)(out). In terms of biological role, NDH shuttles electrons from NAD(P)H:plastoquinone, via FMN and iron-sulfur (Fe-S) centers, to quinones in the photosynthetic chain and possibly in a chloroplast respiratory chain. The immediate electron acceptor for the enzyme in this species is believed to be plastoquinone. Couples the redox reaction to proton translocation, and thus conserves the redox energy in a proton gradient. This chain is NAD(P)H-quinone oxidoreductase subunit K, chloroplastic, found in Marchantia polymorpha (Common liverwort).